Reading from the N-terminus, the 356-residue chain is Arginine kinase Lit v 2 (356 aa).

One can recognise a Phosphagen kinase N-terminal domain in the interval 9-91 (KLEAGFKKLE…FDPIIEDYHV (83 aa)). Residue 64-68 (GVGIY) coordinates L-arginine. The Phosphagen kinase C-terminal domain occupies 119-356 (FVISTRVRCG…LELIKMEKEM (238 aa)). ATP-binding positions include 122-126 (STRVR) and His-185. Glu-225 serves as a coordination point for L-arginine. Residue Arg-229 coordinates ATP. Residue Cys-271 participates in L-arginine binding. Residues 280 to 284 (RASVH) and 309 to 314 (RGTRGE) each bind ATP. Glu-314 is an L-arginine binding site.

The protein belongs to the ATP:guanido phosphotransferase family. Expressed in muscle (at protein level). Expressed in muscle, heart, nerve, stomach and hemocytes, with the highest expression in muscle. Very low expression in eyestalk and intestine. Not expressed in hepatopancreas, gill and skin.

The catalysed reaction is L-arginine + ATP = N(omega)-phospho-L-arginine + ADP + H(+). With respect to regulation, no change in activity after supplementation with 10 mM glucose. However, activity decreases significantly when glucose concentration is higher than 50 mM and almost all activity is lost with 200 mM glucose. Activity is significantly increased after treatment with 10 mM and 50 mM ATP. However, activity drops significantly with 200 mM ATP. Inhibited by 10-200 mM alpha-ketoglutarate. No change in activity after incubation with 10-200 mM L-citrulline, L-ornaline or glycerol. Functionally, catalyzes the reversible transfer of high energy ATP gamma-phosphate group to L-arginine. In Penaeus vannamei (Whiteleg shrimp), this protein is Arginine kinase Lit v 2.